The primary structure comprises 217 residues: Methylthioribulose-1-phosphate dehydratase (217 aa).

Zn(2+) is bound by residues His106 and His108.

Belongs to the aldolase class II family. MtnB subfamily. Requires Zn(2+) as cofactor.

The enzyme catalyses 5-(methylsulfanyl)-D-ribulose 1-phosphate = 5-methylsulfanyl-2,3-dioxopentyl phosphate + H2O. It functions in the pathway amino-acid biosynthesis; L-methionine biosynthesis via salvage pathway; L-methionine from S-methyl-5-thio-alpha-D-ribose 1-phosphate: step 2/6. In terms of biological role, catalyzes the dehydration of methylthioribulose-1-phosphate (MTRu-1-P) into 2,3-diketo-5-methylthiopentyl-1-phosphate (DK-MTP-1-P). The chain is Methylthioribulose-1-phosphate dehydratase from Xanthomonas euvesicatoria pv. vesicatoria (strain 85-10) (Xanthomonas campestris pv. vesicatoria).